Consider the following 82-residue polypeptide: Protein C2 (82 aa).

This is Protein C2 (C2) from Sterkiella nova (Ciliate).